A 191-amino-acid chain; its full sequence is Cell number regulator 1 (191 aa).

A disordered region spans residues 13–44 (FSAGAPPTAPPPPAAYHQQQQQHGANMDTSRP). Low complexity predominate over residues 27–37 (AYHQQQQQHGA). A helical transmembrane segment spans residues 91–113 (IASGLVYGLICASTGMGCLYSCL).

It belongs to the cornifelin family. Expressed in roots, coleoptiles, stalks and silks. Detected in leaves, apical meristems, immature ears and pericarps. Highest expression in coleoptiles and silks.

The protein localises to the membrane. Functionally, acts as a negative regulator of cell number. The polypeptide is Cell number regulator 1 (CNR1) (Zea mays (Maize)).